Consider the following 438-residue polypeptide: Putative F-box protein At5g15660 (438 aa).

Residues 1–24 form a disordered region; that stretch reads MRRRSKKIKTENNSNPETSEERNK. The F-box domain occupies 22-68; the sequence is RNKFDEIPHDLVIEILERLPLKSVARFLTVSKLWATTIRSPDFRKSY.

The protein is Putative F-box protein At5g15660 of Arabidopsis thaliana (Mouse-ear cress).